The chain runs to 94 residues: Aspartyl/glutamyl-tRNA(Asn/Gln) amidotransferase subunit C (94 aa).

Belongs to the GatC family. Heterotrimer of A, B and C subunits.

It carries out the reaction L-glutamyl-tRNA(Gln) + L-glutamine + ATP + H2O = L-glutaminyl-tRNA(Gln) + L-glutamate + ADP + phosphate + H(+). The enzyme catalyses L-aspartyl-tRNA(Asn) + L-glutamine + ATP + H2O = L-asparaginyl-tRNA(Asn) + L-glutamate + ADP + phosphate + 2 H(+). Allows the formation of correctly charged Asn-tRNA(Asn) or Gln-tRNA(Gln) through the transamidation of misacylated Asp-tRNA(Asn) or Glu-tRNA(Gln) in organisms which lack either or both of asparaginyl-tRNA or glutaminyl-tRNA synthetases. The reaction takes place in the presence of glutamine and ATP through an activated phospho-Asp-tRNA(Asn) or phospho-Glu-tRNA(Gln). The polypeptide is Aspartyl/glutamyl-tRNA(Asn/Gln) amidotransferase subunit C (Syntrophomonas wolfei subsp. wolfei (strain DSM 2245B / Goettingen)).